The sequence spans 317 residues: 4-hydroxy-3-methylbut-2-enyl diphosphate reductase (317 aa).

C12 serves as a coordination point for [4Fe-4S] cluster. Residues H41 and H74 each coordinate (2E)-4-hydroxy-3-methylbut-2-enyl diphosphate. Residues H41 and H74 each contribute to the dimethylallyl diphosphate site. Isopentenyl diphosphate contacts are provided by H41 and H74. C96 contacts [4Fe-4S] cluster. H124 contributes to the (2E)-4-hydroxy-3-methylbut-2-enyl diphosphate binding site. H124 is a binding site for dimethylallyl diphosphate. Position 124 (H124) interacts with isopentenyl diphosphate. E126 acts as the Proton donor in catalysis. T168 lines the (2E)-4-hydroxy-3-methylbut-2-enyl diphosphate pocket. C198 contacts [4Fe-4S] cluster. Residues S226, S227, N228, and S270 each coordinate (2E)-4-hydroxy-3-methylbut-2-enyl diphosphate. S226, S227, N228, and S270 together coordinate dimethylallyl diphosphate. Isopentenyl diphosphate-binding residues include S226, S227, N228, and S270.

The protein belongs to the IspH family. The cofactor is [4Fe-4S] cluster.

The enzyme catalyses isopentenyl diphosphate + 2 oxidized [2Fe-2S]-[ferredoxin] + H2O = (2E)-4-hydroxy-3-methylbut-2-enyl diphosphate + 2 reduced [2Fe-2S]-[ferredoxin] + 2 H(+). It catalyses the reaction dimethylallyl diphosphate + 2 oxidized [2Fe-2S]-[ferredoxin] + H2O = (2E)-4-hydroxy-3-methylbut-2-enyl diphosphate + 2 reduced [2Fe-2S]-[ferredoxin] + 2 H(+). The protein operates within isoprenoid biosynthesis; dimethylallyl diphosphate biosynthesis; dimethylallyl diphosphate from (2E)-4-hydroxy-3-methylbutenyl diphosphate: step 1/1. Its pathway is isoprenoid biosynthesis; isopentenyl diphosphate biosynthesis via DXP pathway; isopentenyl diphosphate from 1-deoxy-D-xylulose 5-phosphate: step 6/6. Its function is as follows. Catalyzes the conversion of 1-hydroxy-2-methyl-2-(E)-butenyl 4-diphosphate (HMBPP) into a mixture of isopentenyl diphosphate (IPP) and dimethylallyl diphosphate (DMAPP). Acts in the terminal step of the DOXP/MEP pathway for isoprenoid precursor biosynthesis. The protein is 4-hydroxy-3-methylbut-2-enyl diphosphate reductase of Hahella chejuensis (strain KCTC 2396).